The primary structure comprises 128 residues: Small ribosomal subunit protein uS14m (128 aa).

The protein belongs to the universal ribosomal protein uS14 family. Component of the mitochondrial ribosome small subunit (28S) which comprises a 12S rRNA and about 30 distinct proteins. Interacts with LIAT1.

The protein localises to the mitochondrion. In Bos taurus (Bovine), this protein is Small ribosomal subunit protein uS14m (MRPS14).